A 384-amino-acid polypeptide reads, in one-letter code: Glucans biosynthesis protein C (384 aa).

The next 10 membrane-spanning stretches (helical) occupy residues 17 to 37 (AWLM…THSW), 54 to 74 (FIHA…SYML), 91 to 111 (VGIP…ILLQ), 140 to 160 (LWFL…FTWF), 173 to 193 (AISL…YAAI), 212 to 232 (FIVM…LAFI), 240 to 260 (FTTP…AYLL), 274 to 294 (TESV…FSLG), 311 to 331 (ASLF…AYIT), and 338 to 358 (LIGF…LYEI).

This sequence belongs to the acyltransferase 3 family. OpgC subfamily.

The protein localises to the cell membrane. It participates in glycan metabolism; osmoregulated periplasmic glucan (OPG) biosynthesis. In terms of biological role, necessary for the succinyl substitution of periplasmic glucans. Could catalyze the transfer of succinyl residues from the cytoplasmic side of the membrane to the nascent glucan backbones on the periplasmic side of the membrane. This is Glucans biosynthesis protein C from Salmonella choleraesuis (strain SC-B67).